A 75-amino-acid polypeptide reads, in one-letter code: Protein Tlp homolog (75 aa).

Positions 48 to 75 (KNQRRREALDGMREEIKDEARDKKNGYM) are disordered.

Belongs to the Tlp family.

This Clostridium botulinum (strain 657 / Type Ba4) protein is Protein Tlp homolog.